Reading from the N-terminus, the 182-residue chain is Early nodulin-like protein 10 (182 aa).

Positions 1 to 20 (MSSVMMCCCLLLLFGLLSEG) are cleaved as a signal peptide. The Phytocyanin domain maps to 21–125 (REILVGGKSN…GEKLRVVVLS (105 aa)). The N-linked (GlcNAc...) asparagine glycan is linked to N65. A disulfide bridge links C79 with C113. N-linked (GlcNAc...) asparagine glycosylation is found at N129 and N148. N157 is lipidated: GPI-anchor amidated asparagine. The propeptide at 158 to 182 (AHIMNKGSLNTAWSLLLLLPLGLLV) is removed in mature form.

Belongs to the early nodulin-like (ENODL) family. Mostly expressed in flowers, and, to a lower extent, in leaves, but barely in seedlings, stems, seeds and roots.

Its subcellular location is the cell membrane. Its function is as follows. May act as a carbohydrate transporter. This Arabidopsis thaliana (Mouse-ear cress) protein is Early nodulin-like protein 10.